The sequence spans 325 residues: NADH-quinone oxidoreductase subunit H (325 aa).

The next 8 membrane-spanning stretches (helical) occupy residues 11 to 31, 81 to 101, 114 to 134, 149 to 169, 186 to 206, 237 to 257, 265 to 285, and 304 to 324; these read VLIA…CGAL, MIFT…FAIV, IGIL…LFAG, ASAQ…GVVA, MWNV…GVAV, FFVG…TMFF, LPPF…FILI, and ICLP…LYNA.

It belongs to the complex I subunit 1 family. In terms of assembly, NDH-1 is composed of 13 different subunits. Subunits NuoA, H, J, K, L, M, N constitute the membrane sector of the complex.

Its subcellular location is the cell inner membrane. It carries out the reaction a quinone + NADH + 5 H(+)(in) = a quinol + NAD(+) + 4 H(+)(out). Functionally, NDH-1 shuttles electrons from NADH, via FMN and iron-sulfur (Fe-S) centers, to quinones in the respiratory chain. The immediate electron acceptor for the enzyme in this species is believed to be ubiquinone. Couples the redox reaction to proton translocation (for every two electrons transferred, four hydrogen ions are translocated across the cytoplasmic membrane), and thus conserves the redox energy in a proton gradient. This subunit may bind ubiquinone. In Photorhabdus laumondii subsp. laumondii (strain DSM 15139 / CIP 105565 / TT01) (Photorhabdus luminescens subsp. laumondii), this protein is NADH-quinone oxidoreductase subunit H.